Consider the following 240-residue polypeptide: Small ribosomal subunit protein uS2 (240 aa).

Belongs to the universal ribosomal protein uS2 family.

The protein is Small ribosomal subunit protein uS2 of Wigglesworthia glossinidia brevipalpis.